Consider the following 2235-residue polypeptide: Mediator of RNA polymerase II transcription subunit 12 (2235 aa).

The span at 16 to 35 (SAIGGASARDSGRADSSSIG) shows a compositional bias: low complexity. 6 disordered regions span residues 16-80 (SAIG…EENL), 268-293 (FPAQ…SPAS), 835-858 (SVKR…GCED), 1900-1959 (SSVT…SPAA), 2134-2160 (GSTA…AQGK), and 2183-2202 (WTLL…ASNS). Polar residues predominate over residues 280–293 (MLYTGSMQKNSPAS). A compositionally biased stretch (polar residues) spans 1900-1916 (SSVTNRSTTSNKQMGTA). Positions 1917 to 1927 (SSGSEISSNKG) are enriched in low complexity. Over residues 2134–2155 (GSTAAAGTNQRNSPAISKSGTA) the composition is skewed to polar residues. Residues 2191–2202 (SSGLSSSNASNS) show a composition bias toward low complexity.

The protein belongs to the Mediator complex subunit 12 family. As to quaternary structure, component of the Mediator complex. In terms of tissue distribution, ubiquitous. Higher expression in vascular tissue, shoot apex and developing floral organs.

The protein localises to the nucleus. Functionally, component of the Mediator complex, a coactivator involved in the regulated transcription of nearly all RNA polymerase II-dependent genes. Mediator functions as a bridge to convey information from gene-specific regulatory proteins to the basal RNA polymerase II transcription machinery. The Mediator complex, having a compact conformation in its free form, is recruited to promoters by direct interactions with regulatory proteins and serves for the assembly of a functional preinitiation complex with RNA polymerase II and the general transcription factors. Flowering regulator which suppresses FLC expression, promotes FT and TSF expression and up-regulates SOC1 and FUL mainly in an FT-dependent manner under long-day conditions. Involved in diverse developmental aspects through gene regulation and modulation of the auxin response. Acts closely together with MAB13. Involved in the regulation of embryo patterning and cotyledon organogenesis by transiently repressing a transcriptional program that interferes with this process. The polypeptide is Mediator of RNA polymerase II transcription subunit 12 (MED12) (Arabidopsis thaliana (Mouse-ear cress)).